A 96-amino-acid chain; its full sequence is ESAT-6-like protein SAG1039 (96 aa).

Belongs to the WXG100 family. sagEsxA-like subfamily. In terms of assembly, homodimer.

This Streptococcus agalactiae serotype V (strain ATCC BAA-611 / 2603 V/R) protein is ESAT-6-like protein SAG1039.